Consider the following 401-residue polypeptide: Chromatin modification-related protein EAF3 (401 aa).

A Tudor-knot domain is found at 13–98 (RCLAFHGPLM…DEWVGYDRIR (86 aa)). Residues 39–53 (TSIPNDKPGGSSQAT) show a composition bias toward polar residues. 2 disordered regions span residues 39-65 (TSIP…GEDE) and 117-210 (EAKK…NMLH). 2 stretches are compositionally biased toward basic and acidic residues: residues 54–63 (KEIKPQKLGE) and 117–126 (EAKKSLLEQQ). Positions 153–190 (SISKSTSQSFLTSSVSGRKSGRSSANSLHPGSSLRSSS) are enriched in low complexity. A Phosphoserine modification is found at Ser201. One can recognise an MRG domain in the interval 216–399 (PTPKISLQIP…TSSQYEGVAL (184 aa)).

This sequence belongs to the MRG family. As to quaternary structure, component of the NuA4 histone acetyltransferase complex composed of at least ACT1, ARP4, YAF9, VID21, SWC4, EAF3, EAF5, EAF6, EAF7, EPL1, ESA1, TRA1 and YNG2.

The protein resides in the nucleus. Its function is as follows. Component of the NuA4 histone acetyltransferase complex which is involved in transcriptional activation of selected genes principally by acetylation of nucleosomal histone H4 and H2A. The NuA4 complex is also involved in DNA repair. The polypeptide is Chromatin modification-related protein EAF3 (EAF3) (Saccharomyces cerevisiae (strain ATCC 204508 / S288c) (Baker's yeast)).